Here is a 72-residue protein sequence, read N- to C-terminus: Inner membrane protein YmgF (72 aa).

The Cytoplasmic portion of the chain corresponds to 1 to 9 (MNNSNNLDY). The chain crosses the membrane as a helical span at residues 10–30 (FTLYIIFSIAFMLITLLVILI). The Periplasmic segment spans residues 31–34 (AKPS). The helical transmembrane segment at 35-55 (TGLGEVLVTINLLNALVWLAI) threads the bilayer. Residues 56–72 (NLVNRLRERLVNHRDQQ) lie on the Cytoplasmic side of the membrane.

Interacts with FtsL, FtsQ, FtsI, FtsN, and probably many other cell division proteins.

It localises to the cell inner membrane. In terms of biological role, could be involved in cell division. May participate in the stabilization of the cell divisome under specific conditions. The protein is Inner membrane protein YmgF (ymgF) of Escherichia coli (strain K12).